Here is a 277-residue protein sequence, read N- to C-terminus: RsbT co-antagonist protein RsbRB (277 aa).

Positions 165-276 constitute an STAS domain; sequence SSPVITLSKS…TNLAQALNYH (112 aa). Thr186 is modified (phosphothreonine).

As to quaternary structure, interacts with RsbRA and RsbS in the stressosome. The stressosome probably also contains RsbRC and RsbRD. In terms of processing, phosphorylated by RsbT.

Functionally, one of 4 functionally non-identical RsbR paralogs, it functions in the environmental signaling branch of the general stress response. In terms of biological role, negative regulator of sigma-B activity. Non-phosphorylated RsbS binds to RsbT, preventing its association with RsbU. Requires any one of RsbRA, RsbRB, RsbRC or RsbRD to sequester RsbT. When RsbS and the RsbR paralog(s) are phosphorylated, they release RsbT, which can then bind and activate RsbU. The sequence is that of RsbT co-antagonist protein RsbRB (rsbRB) from Bacillus subtilis (strain 168).